A 363-amino-acid polypeptide reads, in one-letter code: tRNA dimethylallyltransferase (363 aa).

ATP is bound at residue 65–72; sequence GPTASGKS. 67-72 serves as a coordination point for substrate; sequence TASGKS. Interaction with substrate tRNA stretches follow at residues 90–93 and 214–218; these read DSMQ and QRLIR.

Belongs to the IPP transferase family. Monomer. Mg(2+) serves as cofactor.

It carries out the reaction adenosine(37) in tRNA + dimethylallyl diphosphate = N(6)-dimethylallyladenosine(37) in tRNA + diphosphate. Functionally, catalyzes the transfer of a dimethylallyl group onto the adenine at position 37 in tRNAs that read codons beginning with uridine, leading to the formation of N6-(dimethylallyl)adenosine (i(6)A). In Rickettsia rickettsii (strain Sheila Smith), this protein is tRNA dimethylallyltransferase.